The chain runs to 500 residues: MASMLLAQRLACSFQHSYRLLVPGSRHISQAAAKVDVEFDYDGPLMKTEVPGPRSQELMKQLNIIQNAEAVHFFCNYEESRGNYLVDVDGNRMLDLYSQISSVPIGYSHPALLKLIQQPQNASMFVNRPALGILPPENFVEKLRQSLLSVAPKGMSQLITMACGSCSNENALKTIFMWYRSKERGQRGFSQEELETCMINQAPGCPDYSILSFMGAFHGRTMGCLATTHSKAIHKIDIPSFDWPIAPFPRLKYPLEEFVKENQQEEARCLEEVEDLIVKYRKKKKTVAGIIVEPIQSEGGDNHASDDFFRKLRDIARKHGCAFLVDEVQTGGGCTGKFWAHEHWGLDDPADVMTFSKKMMTGGFFHKEEFRPNAPYRIFNTWLGDPSKNLLLAEVINIIKREDLLNNAAHAGKALLTGLLDLQARYPQFISRVRGRGTFCSFDTPDDSIRNKLILIARNKGVVLGGCGDKSIRFRPTLVFRDHHAHLFLNIFSDILADFK.

The N-terminal 28 residues, 1–28 (MASMLLAQRLACSFQHSYRLLVPGSRHI), are a transit peptide targeting the mitochondrion. Residue cysteine 163 participates in [2Fe-2S] cluster binding. 164-165 (GS) is a binding site for pyridoxal 5'-phosphate. Cysteine 166 is a binding site for [2Fe-2S] cluster. Arginine 220 is a binding site for substrate. N6-succinyllysine is present on lysine 231. Lysine 252 carries the post-translational modification N6-acetyllysine; alternate. Lysine 252 carries the N6-succinyllysine; alternate modification. Residues lysine 279 and lysine 318 each carry the N6-acetyllysine modification. At lysine 357 the chain carries N6-(pyridoxal phosphate)lysine. Threonine 381 lines the pyridoxal 5'-phosphate pocket. Lysine 413 is modified (N6-acetyllysine; alternate). Lysine 413 is subject to N6-succinyllysine; alternate. Lysine 452 and lysine 470 each carry N6-acetyllysine.

It belongs to the class-III pyridoxal-phosphate-dependent aminotransferase family. As to quaternary structure, homodimer; disulfide-linked. It depends on pyridoxal 5'-phosphate as a cofactor. [2Fe-2S] cluster is required as a cofactor. In terms of tissue distribution, liver &gt; pancreas &gt; brain &gt; kidney &gt; heart &gt; placenta.

The protein resides in the mitochondrion matrix. It catalyses the reaction 4-aminobutanoate + 2-oxoglutarate = succinate semialdehyde + L-glutamate. The enzyme catalyses (S)-3-amino-2-methylpropanoate + 2-oxoglutarate = 2-methyl-3-oxopropanoate + L-glutamate. Its function is as follows. Catalyzes the conversion of gamma-aminobutyrate and L-beta-aminoisobutyrate to succinate semialdehyde and methylmalonate semialdehyde, respectively. Can also convert delta-aminovalerate and beta-alanine. The polypeptide is 4-aminobutyrate aminotransferase, mitochondrial (Homo sapiens (Human)).